A 126-amino-acid polypeptide reads, in one-letter code: MAEITKADVISFIEKMSVLELAEMVKELEEKFGVSAAAPVAVAAVAGPAAAEAAEEKTEFDVILKAAGANKIGVIKVVRALTSLGLKEAKDLVDGAPQPLKTGVSKEEAEEAKKQLVEAGAEVEIK.

Belongs to the bacterial ribosomal protein bL12 family. As to quaternary structure, homodimer. Part of the ribosomal stalk of the 50S ribosomal subunit. Forms a multimeric L10(L12)X complex, where L10 forms an elongated spine to which 2 to 4 L12 dimers bind in a sequential fashion. Binds GTP-bound translation factors.

Forms part of the ribosomal stalk which helps the ribosome interact with GTP-bound translation factors. Is thus essential for accurate translation. This Geotalea daltonii (strain DSM 22248 / JCM 15807 / FRC-32) (Geobacter daltonii) protein is Large ribosomal subunit protein bL12.